Reading from the N-terminus, the 217-residue chain is Monomethylamine corrinoid protein 1 (217 aa).

The region spanning 1-91 (MANQEIFDKL…ELEKNKKEGE (91 aa)) is the B12-binding N-terminal domain. The B12-binding domain occupies 93-217 (AGLAITFVAE…AAKVALEVMK (125 aa)). H106 is a methylcob(III)alamin binding site.

In terms of assembly, can form a complex with MtmB.

The protein operates within one-carbon metabolism; methanogenesis from methylamine. In terms of biological role, acts as a methyl group carrier between MtmB and MtbA. The polypeptide is Monomethylamine corrinoid protein 1 (mtmC1) (Methanosarcina barkeri).